The chain runs to 626 residues: Biosynthetic arginine decarboxylase (626 aa).

Lys99 is subject to N6-(pyridoxal phosphate)lysine. Residue 279–289 (VDVGGGLGVDY) coordinates substrate.

Belongs to the Orn/Lys/Arg decarboxylase class-II family. SpeA subfamily. It depends on Mg(2+) as a cofactor. Pyridoxal 5'-phosphate is required as a cofactor.

The catalysed reaction is L-arginine + H(+) = agmatine + CO2. The protein operates within amine and polyamine biosynthesis; agmatine biosynthesis; agmatine from L-arginine: step 1/1. Catalyzes the biosynthesis of agmatine from arginine. The sequence is that of Biosynthetic arginine decarboxylase from Chromobacterium violaceum (strain ATCC 12472 / DSM 30191 / JCM 1249 / CCUG 213 / NBRC 12614 / NCIMB 9131 / NCTC 9757 / MK).